A 150-amino-acid chain; its full sequence is Urease accessory protein UreE (150 aa).

The protein belongs to the UreE family.

The protein localises to the cytoplasm. Functionally, involved in urease metallocenter assembly. Binds nickel. Probably functions as a nickel donor during metallocenter assembly. This Staphylococcus aureus (strain Mu3 / ATCC 700698) protein is Urease accessory protein UreE.